A 319-amino-acid chain; its full sequence is N-acetyl-D-glucosamine kinase (319 aa).

Thr14 lines the ATP pocket. Substrate contacts are provided by Asn37 and Asp113. An ATP-binding site is contributed by Thr135. Residues 153-155 (GWG) and Asp160 contribute to the substrate site. Ala220 contacts ATP.

Belongs to the eukaryotic-type N-acetylglucosamine kinase family. As to quaternary structure, homodimer.

The catalysed reaction is N-acetyl-D-glucosamine + ATP = N-acetyl-D-glucosamine 6-phosphate + ADP + H(+). Its function is as follows. Converts N-acetylglucosamine (GlcNAc), a major component of complex carbohydrates, into GlcNAc 6-phosphate. Also has ManNAc kinase activity. The protein is N-acetyl-D-glucosamine kinase (nagk) of Dictyostelium discoideum (Social amoeba).